Consider the following 139-residue polypeptide: Ribosome-binding factor A (139 aa).

The interval 112–139 is disordered; it reads EARTQGQAAPAPDVEPAPGAAPDDEAEE. A compositionally biased stretch (low complexity) spans 119–132; sequence AAPAPDVEPAPGAA.

It belongs to the RbfA family. In terms of assembly, monomer. Binds 30S ribosomal subunits, but not 50S ribosomal subunits or 70S ribosomes.

Its subcellular location is the cytoplasm. In terms of biological role, one of several proteins that assist in the late maturation steps of the functional core of the 30S ribosomal subunit. Associates with free 30S ribosomal subunits (but not with 30S subunits that are part of 70S ribosomes or polysomes). Required for efficient processing of 16S rRNA. May interact with the 5'-terminal helix region of 16S rRNA. In Anaeromyxobacter dehalogenans (strain 2CP-1 / ATCC BAA-258), this protein is Ribosome-binding factor A.